A 487-amino-acid chain; its full sequence is Citrate/succinate antiporter (487 aa).

14 helical membrane-spanning segments follow: residues 11 to 31, 60 to 80, 95 to 115, 138 to 158, 190 to 210, 214 to 234, 237 to 257, 288 to 308, 309 to 329, 345 to 365, 379 to 399, 401 to 421, 424 to 444, and 463 to 483; these read LLAPLVVMGVMFLIPVPDGMP, FIAVTICVIGSNYLLFDAKEL, GLAGFSSTTVWLVFGAFIFAL, TLTLGYAIVIIDILLAPFTPS, IGGYLMWMMVISTSLSSSMFV, APNVLGLEFVSKIAGIQISWL, FLCFLPVGVILLIIAPWLSYV, WTLIGLVLLSLGLWVFGSEVI, NATAVGLLAVSLMLALHVVPW, LATLVVMANGLTRSGFIDWFA, ATVIVLVLVFYFAHYLFASLS, HTATMLPVILAVGKGIPGVPM, LCILLVLSIGIMGCLTPYATG, and LGAIFGVIYISMLLLVGWPIL.

Belongs to the SLC13A/DASS transporter (TC 2.A.47) family. DIT1 subfamily.

It localises to the cell inner membrane. Responsible for the uptake of citrate in exchange to the efflux of succinate. Has a relatively broad specificity for C(4)-dicarboxylates and tricarboxylates. This Escherichia coli O157:H7 protein is Citrate/succinate antiporter (citT).